Reading from the N-terminus, the 491-residue chain is MSNLEESLRSLSLDFLNLLINGQAFSDVTFSVEGRLVHAHRCILAARSLFFRKFFCGTDSPQPVTGIDPTQHGSVPASPTRGSTAPAGIIPVNSVGYEVFLLLLQFLYSGQVSIVPQKHEPRPNCGERGCWHTHCSAAVDLALDTLAASRYFGVEQLALLTQKQLASMVEKASIEDVMKVLIASRKQDMHQLWTTCSHLVAKSGLPPEILAKHLPIDVVTKIEELRLKSSIARRSLMPHNHHHDLSVAQDLEDQKIRRMRRALDSSDVELVKLMVMGEGLNLDESLALHYAVESCSREVVKALLELGAADVNYPAGPAGKTPLHIAAEMVSPDMVAVLLDHHADPNVRTVGGITPLDILRTLTSDFLFKGAVPGLTHIEPNKLRLCLELVQSAAMVISREEGNNSNNQNNDNNTGIYPHMNEEHNSGSSGGSNNNLDSRLVYLNLGAGTGQMGPGRDQGDDHNSQREGMSRHHHHHQDPSTMYHHHHQHHF.

The region spanning 26 to 116 (SDVTFSVEGR…LYSGQVSIVP (91 aa)) is the BTB domain. The segment at 122 to 136 (RPNCGERGCWHTHCS) adopts a C2HC NPR-type zinc-finger fold. Positions 125, 130, 132, and 135 each coordinate Zn(2+). ANK repeat units follow at residues 254–283 (QKIR…LNLD), 284–313 (ESLA…DVNY), 318–347 (AGKT…DPNV), and 351–385 (GGIT…KLRL). Residues 400-491 (EEGNNSNNQN…MYHHHHQHHF (92 aa)) are disordered. Low complexity predominate over residues 403–413 (NNSNNQNNDNN). The span at 457–470 (DQGDDHNSQREGMS) shows a compositional bias: basic and acidic residues.

This sequence belongs to the plant 'ANKYRIN-BTB/POZ' family. 'NOOT-BOP-COCH-like' (NBCL) subfamily. In terms of assembly, homodimer or heterodimer with BOP1. Interacts with PAN. As to expression, highly expressed in young floral meristem. Predominantly expressed in the boundary between floral meristem (FM) and sepal primordia.

Its subcellular location is the cytoplasm. It localises to the nucleus. Its pathway is protein modification; protein ubiquitination. Its function is as follows. May act as a substrate-specific adapter of an E3 ubiquitin-protein ligase complex (CUL3-RBX1-BTB) which mediates the ubiquitination and subsequent proteasomal degradation of target proteins. Acts redundantly with BOP2. BOP1/2 promote leaf and floral meristem fate and determinacy in a pathway targeting AP1 and AGL24. BOP1/2 act as transcriptional co-regulators through direct interaction with TGA factors, including PAN, a direct regulator of AP1. Controls lateral organ fate through positive regulation of adaxial-abaxial polarity genes ATHB-14/PHB, YAB1/FIL and YAB3, and through positive regulation of LOB domain-containing genes LOB, LBD6/AS2 and LBD36. Promotes and maintains a developmentally determinate state in leaf cells through the negative regulation of JAG, JGL and class I KNOX genes. Is also involved in nectary development, formation of normal abscission zones (AZs) and suppression of bract formation, probably by regulating the cell wall disorganization. The sequence is that of Regulatory protein NPR5 from Arabidopsis thaliana (Mouse-ear cress).